We begin with the raw amino-acid sequence, 264 residues long: Thiazole synthase (264 aa).

K106 acts as the Schiff-base intermediate with DXP in catalysis. 1-deoxy-D-xylulose 5-phosphate-binding positions include G167, 193–194, and 215–216; these read AG and NT.

The protein belongs to the ThiG family. In terms of assembly, homotetramer. Forms heterodimers with either ThiH or ThiS.

It localises to the cytoplasm. It carries out the reaction [ThiS sulfur-carrier protein]-C-terminal-Gly-aminoethanethioate + 2-iminoacetate + 1-deoxy-D-xylulose 5-phosphate = [ThiS sulfur-carrier protein]-C-terminal Gly-Gly + 2-[(2R,5Z)-2-carboxy-4-methylthiazol-5(2H)-ylidene]ethyl phosphate + 2 H2O + H(+). It participates in cofactor biosynthesis; thiamine diphosphate biosynthesis. Functionally, catalyzes the rearrangement of 1-deoxy-D-xylulose 5-phosphate (DXP) to produce the thiazole phosphate moiety of thiamine. Sulfur is provided by the thiocarboxylate moiety of the carrier protein ThiS. In vitro, sulfur can be provided by H(2)S. The sequence is that of Thiazole synthase from Xylella fastidiosa (strain Temecula1 / ATCC 700964).